Here is an 89-residue protein sequence, read N- to C-terminus: Long neurotoxin homolog TA-bm16 (89 aa).

An N-terminal signal peptide occupies residues 1 to 21; it reads MKTLLLTLVVVTIVCLDLGYT. Cystine bridges form between C24–C45, C27–C32, C38–C66, C70–C81, and C82–C87.

It belongs to the three-finger toxin family. Ancestral subfamily. Orphan group V sub-subfamily. In terms of tissue distribution, expressed by the venom gland.

The protein resides in the secreted. Exhibits M2 muscarinic acetylcholine receptor (CHRM2)-blocking activity, but has a weak binding activity toward nicotinic AChR. Moreover, it inhibits collagen-induced platelet aggregation. The polypeptide is Long neurotoxin homolog TA-bm16 (Bungarus multicinctus (Many-banded krait)).